The sequence spans 791 residues: Nuclear cap-binding protein subunit 1-A (791 aa).

A disordered region spans residues 1 to 24 (MSRRRHSDENDGGQAHKRRKTSEP). Residues 28 to 240 (EDRLESLICR…CLWAQIQKLK (213 aa)) form the MIF4G domain. The stretch at 641–714 (LHSTIRKMNK…SEQKNLFLVI (74 aa)) forms a coiled coil. Residues 664–687 (QRLAKQHKHRDSDDNDEDSGRKDG) form a disordered region.

It belongs to the NCBP1 family. In terms of assembly, component of the nuclear cap-binding complex (CBC), a heterodimer composed of ncbp1/cbp80 and ncbp2/cbp20 that interacts with m7GpppG-capped RNA. Component of an alternative nuclear cap-binding complex (CBC) composed of ncbp1/cbp80 and ncbp3.

The protein localises to the nucleus. Its subcellular location is the cytoplasm. Component of the cap-binding complex (CBC), which binds cotranscriptionally to the 5'-cap of pre-mRNAs and is involved in various processes such as pre-mRNA splicing, translation regulation, nonsense-mediated mRNA decay, RNA-mediated gene silencing (RNAi) by microRNAs (miRNAs) and mRNA export. The CBC complex is involved in mRNA export from the nucleus, leading to the recruitment of the mRNA export machinery to the 5'-end of mRNA and to mRNA export in a 5' to 3' direction through the nuclear pore. The CBC complex is also involved in mediating U snRNA and intronless mRNAs export from the nucleus. The CBC complex is essential for a pioneer round of mRNA translation, before steady state translation when the CBC complex is replaced by cytoplasmic cap-binding protein eIF4E. The pioneer round of mRNA translation mediated by the CBC complex plays a central role in nonsense-mediated mRNA decay (NMD), NMD only taking place in mRNAs bound to the CBC complex, but not on eIF4E-bound mRNAs. The CBC complex enhances NMD in mRNAs containing at least one exon-junction complex (EJC), promoting the interaction between UPF1 and UPF2. The CBC complex is also involved in 'failsafe' NMD, which is independent of the EJC complex, while it does not participate in Staufen-mediated mRNA decay (SMD). During cell proliferation, the CBC complex is also involved in microRNAs (miRNAs) biogenesis via its interaction with SRRT/ARS2 and is required for miRNA-mediated RNA interference. The CBC complex also acts as a negative regulator of parn, thereby acting as an inhibitor of mRNA deadenylation. In the CBC complex, NCBP1/CBP80 does not bind directly capped RNAs (m7GpppG-capped RNA) but is required to stabilize the movement of the N-terminal loop of NCBP2/CBP20 and lock the CBC into a high affinity cap-binding state with the cap structure. Associates with NCBP3 to form an alternative cap-binding complex (CBC) which plays a key role in mRNA export. The conventional CBC with NCBP2 binds both small nuclear RNA (snRNA) and messenger (mRNA) and is involved in their export from the nucleus whereas the alternative CBC with NCBP3 does not bind snRNA and associates only with mRNA thereby playing a role only in mRNA export. This is Nuclear cap-binding protein subunit 1-A (ncbp1-a) from Xenopus laevis (African clawed frog).